The primary structure comprises 459 residues: Friend virus susceptibility protein 1 (459 aa).

Residues 192-269 (EAELPTVLAS…LNSLAHSNRQ (78 aa)) form a disordered region. Residues 213–223 (SKERTQQDKAD) are compositionally biased toward basic and acidic residues. A compositionally biased stretch (polar residues) spans 226-238 (QIQSSTSLVTSEP).

Retroviral restriction factor that prevents infection by gammaretroviruses. Acts by interacting with the capsid protein ca after entry of the virus into the cell. This interaction presumably disrupt the capsid thereby inactivating the viral genome, making it unable to enter host nucleus and integrate into host genome. This chain is Friend virus susceptibility protein 1 (Fv1), found in Mus musculus (Mouse).